We begin with the raw amino-acid sequence, 325 residues long: MRAELCADLEEALRAGGHEVVRIERACFDIFVRTRDGRAYIVKVLINADGLRREVAEELRRISHFLEAVPVVVALKRHTGPLEKGVVYHRYEVPVLDPLTFARLVEGEPPKAVADRGGQYVVIRADEVDELDVSRVRRRQLRREGGRITLARAEEADVEGVPVELKTPEHVDTGRDRMTRFERRVAELLERMGAERTGKVRRAPFKLLAKDGETVLARAEEGGDRESIALRDVASATGSMGVIVTRERCKDTYVPTIDIGTLEEIKDLEDLKEYLQERDPEERVRRLVEEAGITSPREIAQRTGIRESVIREFLRRMGITDERKV.

Residues 128–190 form the HTH cro/C1-type domain; the sequence is VDELDVSRVR…FERRVAELLE (63 aa). The segment at residues 139–158 is a DNA-binding region (H-T-H motif); that stretch reads RQLRREGGRITLARAEEADV.

The chain is Putative HTH-type transcriptional regulatory protein MK1005 from Methanopyrus kandleri (strain AV19 / DSM 6324 / JCM 9639 / NBRC 100938).